We begin with the raw amino-acid sequence, 30 residues long: Varv peptide G (30 aa).

The cyclopeptide (Gly-Asn) cross-link spans 1-30; that stretch reads GVPVCGETCFGGTCNTPGCSCDPWPVCSRN. Cystine bridges form between C5/C19, C9/C21, and C14/C27.

In terms of processing, this is a cyclic peptide.

In terms of biological role, probably participates in a plant defense mechanism. The sequence is that of Varv peptide G from Viola arvensis (European field pansy).